Reading from the N-terminus, the 357-residue chain is 2-oxoglutarate-dependent dioxygenase 11 (357 aa).

The Fe2OG dioxygenase domain maps to 207-307 (QPRGLRMAYY…RISAALFHYP (101 aa)). His231, Asp233, and His288 together coordinate Fe cation. Arg298 provides a ligand contact to 2-oxoglutarate.

Belongs to the iron/ascorbate-dependent oxidoreductase family. Requires Fe(2+) as cofactor. It depends on L-ascorbate as a cofactor. Expressed in shoots.

Its subcellular location is the cytoplasm. It carries out the reaction melatonin + 2-oxoglutarate + O2 = 2-hydroxymelatonin + succinate + CO2. Involved in melatonin degradation. Catalyzes the hydroxylation of melatonin to produce 2-hydroxymelatonin. This is 2-oxoglutarate-dependent dioxygenase 11 from Oryza sativa subsp. japonica (Rice).